The chain runs to 263 residues: 3-methyl-2-oxobutanoate hydroxymethyltransferase (263 aa).

Mg(2+) is bound by residues Asp-45 and Asp-84. 3-methyl-2-oxobutanoate-binding positions include 45 to 46 (DS), Asp-84, and Lys-112. Glu-114 contacts Mg(2+). Glu-180 functions as the Proton acceptor in the catalytic mechanism.

Belongs to the PanB family. In terms of assembly, homodecamer; pentamer of dimers. The cofactor is Mg(2+).

It is found in the cytoplasm. It catalyses the reaction 3-methyl-2-oxobutanoate + (6R)-5,10-methylene-5,6,7,8-tetrahydrofolate + H2O = 2-dehydropantoate + (6S)-5,6,7,8-tetrahydrofolate. Its pathway is cofactor biosynthesis; (R)-pantothenate biosynthesis; (R)-pantoate from 3-methyl-2-oxobutanoate: step 1/2. Its function is as follows. Catalyzes the reversible reaction in which hydroxymethyl group from 5,10-methylenetetrahydrofolate is transferred onto alpha-ketoisovalerate to form ketopantoate. This is 3-methyl-2-oxobutanoate hydroxymethyltransferase from Klebsiella pneumoniae subsp. pneumoniae (strain ATCC 700721 / MGH 78578).